Here is a 202-residue protein sequence, read N- to C-terminus: Holliday junction resolvase RecU (202 aa).

Residues T85, D87, E100, and Q119 each contribute to the Mg(2+) site.

It belongs to the RecU family. The cofactor is Mg(2+).

The protein localises to the cytoplasm. It carries out the reaction Endonucleolytic cleavage at a junction such as a reciprocal single-stranded crossover between two homologous DNA duplexes (Holliday junction).. In terms of biological role, endonuclease that resolves Holliday junction intermediates in genetic recombination. Cleaves mobile four-strand junctions by introducing symmetrical nicks in paired strands. Promotes annealing of linear ssDNA with homologous dsDNA. Required for DNA repair, homologous recombination and chromosome segregation. This is Holliday junction resolvase RecU from Streptococcus equi subsp. zooepidemicus (strain MGCS10565).